Here is a 195-residue protein sequence, read N- to C-terminus: Transcriptional regulator LdrP (195 aa).

Positions 110–182 (GELRARIARY…YRRVYLLDLA (73 aa)) constitute an HTH crp-type domain. Positions 142–161 (HEEIADATASIRESVSKVLA) form a DNA-binding region, H-T-H motif.

In terms of assembly, homodimer.

Activates transcription. Positively regulates PcrtB promoter upstream of the crtB operon in a cAMP-independent manner. Regulated genes include genes encoding DNA photolyase, phytoene synthase and cytochrome P450 monooxygenase, which are involved in carotenoid biosynthesis. Positively regulates the light-inducible gene cluster in the megaplasmid in a cAMP-independent manner. This chain is Transcriptional regulator LdrP, found in Thermus thermophilus (strain ATCC 27634 / DSM 579 / HB8).